The sequence spans 293 residues: Heterogeneous nuclear ribonucleoprotein C-like 4 (293 aa).

Residues Ser16–Glu87 enclose the RRM domain. Disordered regions lie at residues Val140–Gly177 and His208–Ser293. Positions Gly177–His208 form a coiled coil. Basic and acidic residues-rich tracts occupy residues His208–Glu222 and Ser229–Ser240. The segment covering Gly242 to Gly263 has biased composition (acidic residues). The segment covering Leu269–Ser293 has biased composition (basic and acidic residues).

This sequence belongs to the RRM HNRPC family. RALY subfamily.

Its subcellular location is the nucleus. The protein is Heterogeneous nuclear ribonucleoprotein C-like 4 of Homo sapiens (Human).